The chain runs to 137 residues: Hemoglobin subunit alpha-2 (137 aa).

One can recognise a Globin domain in the interval 1-137; that stretch reads DDRSHILAIW…VGGSLTSKYR (137 aa). O2 is bound at residue H54. H83 serves as a coordination point for heme b.

It belongs to the globin family. In terms of processing, the N-terminus of the mature protein is acetylated. As to expression, red blood cells.

In Telmatobius peruvianus (Andean frog), this protein is Hemoglobin subunit alpha-2.